The primary structure comprises 359 residues: Probable S-adenosylmethionine-dependent methyltransferase At5g38100 (359 aa).

Residues Tyr19, Cys63, Asn68, Asp104, Ser133, and Phe134 each coordinate S-adenosyl-L-homocysteine. Residues Asn172, Asp258, and Phe260 each contribute to the Mg(2+) site.

This sequence belongs to the methyltransferase superfamily. Type-7 methyltransferase family. In terms of assembly, homodimer. Mg(2+) serves as cofactor.

The sequence is that of Probable S-adenosylmethionine-dependent methyltransferase At5g38100 from Arabidopsis thaliana (Mouse-ear cress).